An 889-amino-acid polypeptide reads, in one-letter code: Oxysterol-binding protein-related protein 8 (889 aa).

The residue at position 1 (Met-1) is an N-acetylmethionine. The tract at residues 1-129 (MEAALADGEP…SLKVQKKNYR (129 aa)) is disordered. 3 positions are modified to phosphoserine: Ser-14, Ser-65, and Ser-68. A compositionally biased stretch (polar residues) spans 62 to 71 (PSLSPASLHS). Composition is skewed to basic and acidic residues over residues 73-88 (GFER…KDDS), 95-109 (SKSE…EKDS), and 116-129 (TKKE…KNYR). The PH domain maps to 148 to 265 (VIVMADWLKI…WMDALELALK (118 aa)). Residues Ser-314, Ser-328, and Ser-342 each carry the phosphoserine modification. A compositionally biased stretch (basic and acidic residues) spans 321–336 (FKDQDLYSDKSDKEND). Residues 321–374 (FKDQDLYSDKSDKENDPEHDESDNEVLGKSEESDTDTSERQDDSYIDPEPVEPL) are disordered. The span at 346 to 363 (VLGKSEESDTDTSERQDD) shows a compositional bias: basic and acidic residues. A 1,2-diacyl-sn-glycero-3-phospho-(1D-myo-inositol 4-phosphate) is bound by residues 420–425 (LSRVVL), 482–485 (KPYN), and 514–515 (HH). Residues 420-425 (LSRVVL) and Asn-485 each bind a 1,2-diacyl-sn-glycero-3-phospho-L-serine. Ser-540 lines the a 1,2-diacyl-sn-glycero-3-phospho-L-serine pocket. A 1,2-diacyl-sn-glycero-3-phospho-(1D-myo-inositol 4-phosphate)-binding residues include Lys-706, Glu-710, and Arg-714. Positions 772-823 (HRTPMVSVPKMKHKPTRQQKKVVKGYSSPEPDIQDSSGSEAQSVKPSTRRKK) are disordered. Residues 781-794 (KMKHKPTRQQKKVV) are compositionally biased toward basic residues. Positions 805–817 (QDSSGSEAQSVKP) are enriched in polar residues. Ser-807, Ser-808, Ser-810, and Ser-814 each carry phosphoserine. A helical membrane pass occupies residues 871–888 (YFVIFLLILLQVIINFIF).

The protein belongs to the OSBP family. In terms of assembly, interacts with SPAG5. Interacts with NUP62. Widely expressed. Most abundant in liver, spleen, kidney, brain and adipose tissue.

It localises to the endoplasmic reticulum membrane. The protein resides in the nucleus membrane. Lipid transporter involved in lipid countertransport between the endoplasmic reticulum and the plasma membrane: specifically exchanges phosphatidylserine with phosphatidylinositol 4-phosphate (PI4P), delivering phosphatidylserine to the plasma membrane in exchange for PI4P, which is degraded by the SAC1/SACM1L phosphatase in the endoplasmic reticulum. Binds phosphatidylserine and PI4P in a mutually exclusive manner. Binds oxysterol, 25-hydroxycholesterol and cholesterol. This chain is Oxysterol-binding protein-related protein 8, found in Mus musculus (Mouse).